The sequence spans 208 residues: Small ribosomal subunit protein uS4 (208 aa).

One can recognise an S4 RNA-binding domain in the interval 95–161 (MRLDALVLRA…VPLQVAAAGA (67 aa)).

Belongs to the universal ribosomal protein uS4 family. In terms of assembly, part of the 30S ribosomal subunit. Contacts protein S5. The interaction surface between S4 and S5 is involved in control of translational fidelity.

Its function is as follows. One of the primary rRNA binding proteins, it binds directly to 16S rRNA where it nucleates assembly of the body of the 30S subunit. In terms of biological role, with S5 and S12 plays an important role in translational accuracy. The chain is Small ribosomal subunit protein uS4 from Pseudarthrobacter chlorophenolicus (strain ATCC 700700 / DSM 12829 / CIP 107037 / JCM 12360 / KCTC 9906 / NCIMB 13794 / A6) (Arthrobacter chlorophenolicus).